Consider the following 114-residue polypeptide: MKTIIVFLSLLVLATKFGDANEGVNQEQMKEVIQNEFREDFLNEMAPMSLLQQLEAIESTLLEKEADRNSRQKRCLGENVPCGDFPCCGKLVCQKTFGYGWLYKSPYCVKPSNG.

Positions 1–20 (MKTIIVFLSLLVLATKFGDA) are cleaved as a signal peptide. Residues 21 to 74 (NEGVNQEQMKEVIQNEFREDFLNEMAPMSLLQQLEAIESTLLEKEADRNSRQKR) constitute a propeptide that is removed on maturation. Disulfide bonds link Cys-75/Cys-88, Cys-82/Cys-93, and Cys-87/Cys-108.

The protein belongs to the neurotoxin 14 (magi-1) family. 03 (ICK-30-40) subfamily. As to expression, expressed by the venom gland.

Its subcellular location is the secreted. Its function is as follows. Ion channel inhibitor. This Trittame loki (Brush-footed trapdoor spider) protein is U17-barytoxin-Tl1a.